Reading from the N-terminus, the 25-residue chain is Cysteine-rich venom protein 25 (25 aa).

Residues 1–25 (NVDFNSESTRRKKKQKEIVDLXNSL) form a disordered region.

This sequence belongs to the CRISP family. Post-translationally, contains 8 disulfide bonds. In terms of tissue distribution, expressed by the venom gland.

It localises to the secreted. The polypeptide is Cysteine-rich venom protein 25 (Naja haje haje (Egyptian cobra)).